The sequence spans 188 residues: Peptidyl-tRNA hydrolase (188 aa).

F15 is a tRNA binding site. The active-site Proton acceptor is H20. TRNA contacts are provided by Y64, N66, and N112.

It belongs to the PTH family. Monomer.

The protein localises to the cytoplasm. The enzyme catalyses an N-acyl-L-alpha-aminoacyl-tRNA + H2O = an N-acyl-L-amino acid + a tRNA + H(+). In terms of biological role, hydrolyzes ribosome-free peptidyl-tRNAs (with 1 or more amino acids incorporated), which drop off the ribosome during protein synthesis, or as a result of ribosome stalling. Functionally, catalyzes the release of premature peptidyl moieties from peptidyl-tRNA molecules trapped in stalled 50S ribosomal subunits, and thus maintains levels of free tRNAs and 50S ribosomes. In Borrelia duttonii (strain Ly), this protein is Peptidyl-tRNA hydrolase.